An 833-amino-acid chain; its full sequence is Leucine--tRNA ligase (833 aa).

Residues 41 to 52 (PYPSGAGLHVGH) carry the 'HIGH' region motif. The short motif at 610–614 (KMSKS) is the 'KMSKS' region element. ATP is bound at residue Lys613.

Belongs to the class-I aminoacyl-tRNA synthetase family.

It is found in the cytoplasm. The enzyme catalyses tRNA(Leu) + L-leucine + ATP = L-leucyl-tRNA(Leu) + AMP + diphosphate. This chain is Leucine--tRNA ligase, found in Streptococcus uberis (strain ATCC BAA-854 / 0140J).